The following is a 505-amino-acid chain: DNA primase DnaG (505 aa).

The Toprim domain occupies 167 to 241 (DAVIVVEGRA…DVDYVAFAPP (75 aa)). Mg(2+)-binding residues include Glu-173, Asp-215, and Asp-217. The tract at residues 268–410 (DEPNLREAAT…PLDNEPRSIE (143 aa)) is disordered. A compositionally biased stretch (low complexity) spans 318 to 327 (AGVVAGGARS). 2 stretches are compositionally biased toward acidic residues: residues 349 to 376 (GEVD…DAEF) and 384 to 402 (PNLD…DAPL).

Belongs to the archaeal DnaG primase family. In terms of assembly, forms a ternary complex with MCM helicase and DNA. It depends on Mg(2+) as a cofactor.

It carries out the reaction ssDNA + n NTP = ssDNA/pppN(pN)n-1 hybrid + (n-1) diphosphate.. RNA polymerase that catalyzes the synthesis of short RNA molecules used as primers for DNA polymerase during DNA replication. The protein is DNA primase DnaG of Halorubrum lacusprofundi (strain ATCC 49239 / DSM 5036 / JCM 8891 / ACAM 34).